A 480-amino-acid chain; its full sequence is MYPPALTLLLTPGLVAAAIQPQAYASSADGRYKLSSYSAPVRGTGTPGSNSTWKLTIDDTPSGRKQTIKGFGAAVTDSTVSVFNALPSAQRTALLNTLMTTAGANFAMMRHTIASSDLSANPAYSYDDSNGQTDLSLSNFNLGGRGNAMASLLAEMRRLQPGLTILGSPWSPPGWMKLNRAIQGTTVNNNLDHAYASQFAQYFVKYLQAYQAKGATIDAITIQNEPLNSRAQMPTMYIYADEAGDLIQNNIGPALRNAGLDTKIWAYDHNTDQPSYPSTVLSRAGGYVPAVAWHCYASSLDWSVLTTFHNAHPGVEQYMTECWTSAKQPTPWNWAASFTMGPLQNWASGVTAWVLGTDTNDGPHLTGSDACDKCTGLVTVDAAAGTYNLRGDYYMMAQFSKFMKKGAVVMSGTGSWTYGDGSGLESVAATNADDGSRVVVIENKFGNEIYVTVEAKSGEVWSGLVYRNSVVTWVLPAAGA.

A signal peptide spans 1–17; that stretch reads MYPPALTLLLTPGLVAA. An N-linked (GlcNAc...) asparagine glycan is attached at Asn-50. Residue Glu-225 is the Proton donor of the active site. The Nucleophile role is filled by Glu-321.

Belongs to the glycosyl hydrolase 30 family.

The protein localises to the secreted. The catalysed reaction is Random hydrolysis of (1-&gt;6)-linkages in (1-&gt;6)-beta-D-glucans.. Its function is as follows. Partially degrades N.crassa cell wall beta-D-glucan, liberating small amounts of oligosaccharides. This Neurospora crassa (strain ATCC 24698 / 74-OR23-1A / CBS 708.71 / DSM 1257 / FGSC 987) protein is Endo-1,6-beta-D-glucanase (neg-1).